Consider the following 265-residue polypeptide: DNA-binding dual transcriptional regulator Rns (265 aa).

Decanoate-binding residues include histidine 20 and arginine 75. Residues 164–261 form the HTH araC/xylS-type domain; it reads DKVRNLIEKD…GVTPKQFFTY (98 aa). DNA-binding regions (H-T-H motif) lie at residues 181 to 202 and 228 to 251; these read GIIA…ESEN and ISQI…NKHY.

In terms of assembly, homodimer; each subunit binds one decanoate molecule.

It is found in the cytoplasm. Rns-dependent expression of pilins and outer membrane proteins CexE-alpha and CexE-epsilon are inhibited in vivo by decanoic acid (decanoate); has no effect on expression of DnaK or flagellins. Decanoate relieves Rns-dependent repression of nlpA. Functionally, a transcription factor required for the expression of the CS1 and CS2 adhesins of enterotoxigenic E.coli. Required for expression of pilins and some outer membrane lipoproteins. Represses expression of nlpA. This is DNA-binding dual transcriptional regulator Rns from Escherichia coli.